The primary structure comprises 227 residues: Orotidine 5'-phosphate decarboxylase (227 aa).

Substrate is bound by residues aspartate 8, lysine 30, 59 to 68 (DLKLYDIPYT), threonine 118, arginine 178, glutamine 187, glycine 207, and arginine 208. The active-site Proton donor is the lysine 61.

This sequence belongs to the OMP decarboxylase family. Type 1 subfamily. In terms of assembly, homodimer.

It catalyses the reaction orotidine 5'-phosphate + H(+) = UMP + CO2. Its pathway is pyrimidine metabolism; UMP biosynthesis via de novo pathway; UMP from orotate: step 2/2. Functionally, catalyzes the decarboxylation of orotidine 5'-monophosphate (OMP) to uridine 5'-monophosphate (UMP). The protein is Orotidine 5'-phosphate decarboxylase of Helicobacter pylori (strain ATCC 700392 / 26695) (Campylobacter pylori).